The sequence spans 473 residues: Photosystem II CP43 reaction center protein (473 aa).

The propeptide occupies 1 to 14; sequence MKTLYSLRRFYHVE. Thr15 bears the N-acetylthreonine mark. Thr15 carries the post-translational modification Phosphothreonine. 5 helical membrane-spanning segments follow: residues 69-93, 134-155, 178-200, 255-275, and 291-312; these read LFEV…PHLA, LIGP…RDKN, KAIY…RIID, KPFA…LSYS, and WYNN…ASQS. Glu367 is a [CaMn4O5] cluster binding site. A helical membrane pass occupies residues 447–471; that stretch reads RARAAAAGFEKGINRENEPVLTLRP.

Belongs to the PsbB/PsbC family. PsbC subfamily. As to quaternary structure, PSII is composed of 1 copy each of membrane proteins PsbA, PsbB, PsbC, PsbD, PsbE, PsbF, PsbH, PsbI, PsbJ, PsbK, PsbL, PsbM, PsbT, PsbX, PsbY, PsbZ, Psb30/Ycf12, at least 3 peripheral proteins of the oxygen-evolving complex and a large number of cofactors. It forms dimeric complexes. Binds multiple chlorophylls and provides some of the ligands for the Ca-4Mn-5O cluster of the oxygen-evolving complex. It may also provide a ligand for a Cl- that is required for oxygen evolution. PSII binds additional chlorophylls, carotenoids and specific lipids. is required as a cofactor.

The protein localises to the plastid. It localises to the chloroplast thylakoid membrane. Functionally, one of the components of the core complex of photosystem II (PSII). It binds chlorophyll and helps catalyze the primary light-induced photochemical processes of PSII. PSII is a light-driven water:plastoquinone oxidoreductase, using light energy to abstract electrons from H(2)O, generating O(2) and a proton gradient subsequently used for ATP formation. This is Photosystem II CP43 reaction center protein from Guillardia theta (Cryptophyte).